A 188-amino-acid chain; its full sequence is Phosphoribosylglycinamide formyltransferase (188 aa).

12–14 (GSN) provides a ligand contact to N(1)-(5-phospho-beta-D-ribosyl)glycinamide. Residues K66, 91-94 (MRLI), and N108 contribute to the (6R)-10-formyltetrahydrofolate site. Residue H110 is the Proton donor of the active site.

It belongs to the GART family.

It catalyses the reaction N(1)-(5-phospho-beta-D-ribosyl)glycinamide + (6R)-10-formyltetrahydrofolate = N(2)-formyl-N(1)-(5-phospho-beta-D-ribosyl)glycinamide + (6S)-5,6,7,8-tetrahydrofolate + H(+). The protein operates within purine metabolism; IMP biosynthesis via de novo pathway; N(2)-formyl-N(1)-(5-phospho-D-ribosyl)glycinamide from N(1)-(5-phospho-D-ribosyl)glycinamide (10-formyl THF route): step 1/1. Functionally, catalyzes the transfer of a formyl group from 10-formyltetrahydrofolate to 5-phospho-ribosyl-glycinamide (GAR), producing 5-phospho-ribosyl-N-formylglycinamide (FGAR) and tetrahydrofolate. The sequence is that of Phosphoribosylglycinamide formyltransferase from Staphylococcus aureus (strain COL).